Consider the following 156-residue polypeptide: AP-1 complex subunit sigma-1 (156 aa).

It belongs to the adaptor complexes small subunit family. Adapter protein complex 1 (AP-1) is a heterotetramer composed of two large adaptins (gamma-type subunit APL4 and beta-type subunit APL2), a medium adaptin (mu-type subunit APM1) and a small adaptin (sigma-type subunit APS1). AP-1 interacts with clathrin. Also a component of the AP-1R complex composed of at least APM2, APL4 and APS1.

The protein resides in the cytoplasm. It localises to the nucleus. The protein localises to the cytoplasmic vesicle. It is found in the clathrin-coated vesicle membrane. Its subcellular location is the endosome. The protein resides in the golgi apparatus. In terms of biological role, component of the adapter complexes which link clathrin to receptors in coated vesicles. Clathrin-associated protein complexes are believed to interact with the cytoplasmic tails of membrane proteins, leading to their selection and concentration. AP19 is probably a subunit of the Golgi membrane adapter. Component of the AP-1-related (AP-1R) complex, an adapter protein complex that mediates sorting of cargo SNARE SNC1. In contrast to the APM1-containing AP-1 complex, AP-1R is incapable of sorting CHS3. This chain is AP-1 complex subunit sigma-1 (APS1), found in Saccharomyces cerevisiae (strain ATCC 204508 / S288c) (Baker's yeast).